Reading from the N-terminus, the 432-residue chain is 3-phosphoshikimate 1-carboxyvinyltransferase (432 aa).

3-phosphoshikimate contacts are provided by Lys23, Ser24, and Arg28. A phosphoenolpyruvate-binding site is contributed by Lys23. 2 residues coordinate phosphoenolpyruvate: Gly96 and Arg125. 3-phosphoshikimate contacts are provided by Ser170, Gln172, Asp318, and Lys345. Gln172 contacts phosphoenolpyruvate. Asp318 serves as the catalytic Proton acceptor. The phosphoenolpyruvate site is built by Arg349 and Arg391.

It belongs to the EPSP synthase family. As to quaternary structure, monomer.

Its subcellular location is the cytoplasm. It carries out the reaction 3-phosphoshikimate + phosphoenolpyruvate = 5-O-(1-carboxyvinyl)-3-phosphoshikimate + phosphate. Its pathway is metabolic intermediate biosynthesis; chorismate biosynthesis; chorismate from D-erythrose 4-phosphate and phosphoenolpyruvate: step 6/7. Catalyzes the transfer of the enolpyruvyl moiety of phosphoenolpyruvate (PEP) to the 5-hydroxyl of shikimate-3-phosphate (S3P) to produce enolpyruvyl shikimate-3-phosphate and inorganic phosphate. The chain is 3-phosphoshikimate 1-carboxyvinyltransferase from Gloeobacter violaceus (strain ATCC 29082 / PCC 7421).